The sequence spans 2999 residues: TPR and ankyrin repeat-containing protein 1 (2999 aa).

The tract at residues 1–87 is disordered; that stretch reads MASTTAGRRW…QPRGSTDSAC (87 aa). Positions 19–36 are enriched in low complexity; that stretch reads RGPTPRSRAPGAKLSAPE. TPR repeat units follow at residues 144 to 177 and 179 to 211; these read AMLL…DPTY and KGYY…LQRS. 6 ANK repeats span residues 297-327, 328-361, 369-405, 538-567, 572-593, and 621-654; these read EKYV…NIET, IGPN…EWKE, AGCT…DPTL, SQDR…DPRS, EGDT…DIGF, and NGNT…NFNL. Disordered regions lie at residues 684 to 722, 773 to 831, 1151 to 1211, and 1318 to 1344; these read RRKN…LPCG, MPLP…GASQ, LEVE…GCVP, and WEED…QTGD. Composition is skewed to polar residues over residues 699 to 717 and 801 to 815; these read SRSS…TSFK and TQRM…NNPV. The span at 1151 to 1164 shows a compositional bias: basic and acidic residues; it reads LEVEPGKEGPGREE. The segment covering 1318-1327 has biased composition (acidic residues); the sequence is WEEDDEEVEA. TPR repeat units lie at residues 1772–1805 and 1866–1899; these read PYEW…EKEK and LGKI…DLAL.

As to expression, expressed only in the brain. Detected in the hippocampus, hypothalamus and cingulate gyrus.

The sequence is that of TPR and ankyrin repeat-containing protein 1 (Trank1) from Mus musculus (Mouse).